The following is a 119-amino-acid chain: Autophagy-related protein 8A (119 aa).

Gly-117 carries Phosphatidylethanolamine amidated glycine lipidation. Positions 118–119 are cleaved as a propeptide — removed in mature form; that stretch reads SA.

The protein belongs to the ATG8 family. As to quaternary structure, interacts with ATG4. Post-translationally, the C-terminal 2 residues are removed by ATG4 to expose Gly-117 at the C-terminus. The C-terminal Gly is then amidated with phosphatidylethanolamine by an activating system similar to that for ubiquitin. As to expression, constitutively expressed.

It is found in the cytoplasmic vesicle. The protein resides in the autophagosome membrane. Its subcellular location is the vacuole membrane. It localises to the cytoplasm. The protein localises to the cytoskeleton. Ubiquitin-like modifier involved in cytoplasm to vacuole transport (Cvt) vesicles and autophagosomes formation. May mediate the delivery of the vesicles and autophagosomes to the vacuole via the microtubule cytoskeleton. In terms of biological role, ubiquitin-like modifier involved in autophagosomes formation. May mediate the delivery of the autophagosomes to the vacuole via the microtubule cytoskeleton. This chain is Autophagy-related protein 8A (ATG8A), found in Oryza sativa subsp. indica (Rice).